The following is a 357-amino-acid chain: Fructose-1,6-bisphosphatase class 1 2 (357 aa).

The Mg(2+) site is built by E90, D112, L114, and D115. Substrate is bound by residues 115-118 (DGSS) and N206. E278 serves as a coordination point for Mg(2+).

It belongs to the FBPase class 1 family. As to quaternary structure, homotetramer. The cofactor is Mg(2+).

Its subcellular location is the cytoplasm. The catalysed reaction is beta-D-fructose 1,6-bisphosphate + H2O = beta-D-fructose 6-phosphate + phosphate. The protein operates within carbohydrate biosynthesis; gluconeogenesis. The chain is Fructose-1,6-bisphosphatase class 1 2 from Dechloromonas aromatica (strain RCB).